A 220-amino-acid chain; its full sequence is uncharacterized protein (220 aa).

Helical transmembrane passes span 9 to 29 (LWIT…GSTQ), 54 to 74 (YAVH…FLAV), 105 to 125 (VQGI…IHLW), and 177 to 197 (VLAV…VIEM).

Its subcellular location is the cell membrane. This is an uncharacterized protein from Sinorhizobium fredii (strain NBRC 101917 / NGR234).